A 25-amino-acid chain; its full sequence is Superoxide dismutase [Mn], mitochondrial (25 aa).

Mn(2+) is bound at residue His-9.

The protein belongs to the iron/manganese superoxide dismutase family. Homotetramer. Mn(2+) is required as a cofactor.

The protein resides in the mitochondrion matrix. The catalysed reaction is 2 superoxide + 2 H(+) = H2O2 + O2. Destroys superoxide anion radicals which are normally produced within the cells and which are toxic to biological systems. This chain is Superoxide dismutase [Mn], mitochondrial, found in Alternaria alternata (Alternaria rot fungus).